The sequence spans 207 residues: MRLERVLEEARAKGYPIEDNGLGNLWVVLPRERFKEEMAHYKAMGFNFLADIVGLDYLTYPDPRPERFAVVYELVSLPGWKDGDGSRFFVRVYVPEEDPRLPTVTDLWGSANFLEREVYDLFGIVFEGHPDLRKILTPEDLEGHPLRKDYPLGETPTLFREGRYIIPAEFRAALTGKDPGLTFYKGGSRKGYRSLWADLKKAREVKG.

This sequence belongs to the complex I 30 kDa subunit family. In terms of assembly, NDH-1 is composed of 14 different subunits. Subunits NuoB, C, D, E, F, and G constitute the peripheral sector of the complex.

It localises to the cell inner membrane. It carries out the reaction a quinone + NADH + 5 H(+)(in) = a quinol + NAD(+) + 4 H(+)(out). In terms of biological role, NDH-1 shuttles electrons from NADH, via FMN and iron-sulfur (Fe-S) centers, to quinones in the respiratory chain. The immediate electron acceptor for the enzyme in this species is believed to be ubiquinone. Couples the redox reaction to proton translocation (for every two electrons transferred, four hydrogen ions are translocated across the cytoplasmic membrane), and thus conserves the redox energy in a proton gradient. In Thermus thermophilus (strain ATCC BAA-163 / DSM 7039 / HB27), this protein is NADH-quinone oxidoreductase subunit C.